The primary structure comprises 604 residues: ATPase family AAA domain-containing protein 3A homolog (604 aa).

A disordered region spans residues 1–50 (MSWLLGRNRQQPQPDQTAGFSEGGGAADPEGRTAGEKSGDSQLSRAERKA). Polar residues predominate over residues 8 to 19 (NRQQPQPDQTAG). Basic and acidic residues predominate over residues 29 to 50 (PEGRTAGEKSGDSQLSRAERKA). Positions 62 to 221 (ERAADAAKTL…INLEKIRLKA (160 aa)) form a coiled coil. 358–365 (GPPGTGKT) contributes to the ATP binding site.

In terms of assembly, can form homooligomers.

The protein localises to the mitochondrion inner membrane. It is found in the mitochondrion matrix. Its subcellular location is the mitochondrion nucleoid. Its function is as follows. Required to maintain the proper number of mitochondria in neurons and muscles. In Drosophila melanogaster (Fruit fly), this protein is ATPase family AAA domain-containing protein 3A homolog.